Consider the following 144-residue polypeptide: D-aminoacyl-tRNA deacylase (144 aa).

The Gly-cisPro motif, important for rejection of L-amino acids motif lies at glycine 136–proline 137.

It belongs to the DTD family. As to quaternary structure, homodimer.

It localises to the cytoplasm. The catalysed reaction is glycyl-tRNA(Ala) + H2O = tRNA(Ala) + glycine + H(+). It carries out the reaction a D-aminoacyl-tRNA + H2O = a tRNA + a D-alpha-amino acid + H(+). Functionally, an aminoacyl-tRNA editing enzyme that deacylates mischarged D-aminoacyl-tRNAs. Also deacylates mischarged glycyl-tRNA(Ala), protecting cells against glycine mischarging by AlaRS. Acts via tRNA-based rather than protein-based catalysis; rejects L-amino acids rather than detecting D-amino acids in the active site. By recycling D-aminoacyl-tRNA to D-amino acids and free tRNA molecules, this enzyme counteracts the toxicity associated with the formation of D-aminoacyl-tRNA entities in vivo and helps enforce protein L-homochirality. This Corynebacterium efficiens (strain DSM 44549 / YS-314 / AJ 12310 / JCM 11189 / NBRC 100395) protein is D-aminoacyl-tRNA deacylase.